We begin with the raw amino-acid sequence, 461 residues long: UDP-N-acetylmuramate--L-alanine ligase (461 aa).

111 to 117 (GAHGKTT) is an ATP binding site.

Belongs to the MurCDEF family.

It is found in the cytoplasm. The catalysed reaction is UDP-N-acetyl-alpha-D-muramate + L-alanine + ATP = UDP-N-acetyl-alpha-D-muramoyl-L-alanine + ADP + phosphate + H(+). It participates in cell wall biogenesis; peptidoglycan biosynthesis. In terms of biological role, cell wall formation. The chain is UDP-N-acetylmuramate--L-alanine ligase from Pelotomaculum thermopropionicum (strain DSM 13744 / JCM 10971 / SI).